The primary structure comprises 231 residues: Small ribosomal subunit protein uS3 (231 aa).

The KH type-2 domain maps to 17-86; that stretch reads VEQYLNKELK…SPQVEVQQVA (70 aa).

The protein belongs to the universal ribosomal protein uS3 family. In terms of assembly, part of the 30S ribosomal subunit.

Binds the lower part of the 30S subunit head. This is Small ribosomal subunit protein uS3 from Methanocorpusculum labreanum (strain ATCC 43576 / DSM 4855 / Z).